We begin with the raw amino-acid sequence, 349 residues long: Protein RecA (349 aa).

67–74 (GPESSGKT) contributes to the ATP binding site.

The protein belongs to the RecA family.

The protein resides in the cytoplasm. Functionally, can catalyze the hydrolysis of ATP in the presence of single-stranded DNA, the ATP-dependent uptake of single-stranded DNA by duplex DNA, and the ATP-dependent hybridization of homologous single-stranded DNAs. It interacts with LexA causing its activation and leading to its autocatalytic cleavage. The chain is Protein RecA from Chlamydia abortus (strain DSM 27085 / S26/3) (Chlamydophila abortus).